A 705-amino-acid polypeptide reads, in one-letter code: Dolichyl-diphosphooligosaccharide--protein glycosyltransferase subunit STT3A (705 aa).

Residues 1-15 (MTKLGFLRLSYEKQD) lie on the Cytoplasmic side of the membrane. The chain crosses the membrane as a helical span at residues 16–34 (TLLKLLILSMAAVLSFSTR). The Lumenal segment spans residues 35–111 (LFAVLRFESV…VLHFFHITID (77 aa)). Positions 47-49 (EFD) match the DXD motif 1 motif. Asp49 contacts Mn(2+). The chain crosses the membrane as a helical span at residues 112–141 (IRNVCVFLAPLFSSFTTIVTYHLTKELKDA). Position 142 (Gly142) is a topological domain, cytoplasmic. A helical transmembrane segment spans residues 143–158 (AGLLAAAMIAVVPGYI). The Lumenal segment spans residues 159–170 (SRSVAGSYDNEG). Mn(2+) contacts are provided by Asp167 and Glu169. A DXD motif 2 motif is present at residues 167-169 (DNE). Residues 171 to 188 (IAIFCMLLTYYMWIKAVK) traverse the membrane as a helical segment. Residues 189 to 191 (TGS) are Cytoplasmic-facing. Residues 192–207 (IYWAAKCALAYFYMVS) traverse the membrane as a helical segment. Residues 208–210 (SWG) lie on the Lumenal side of the membrane. The chain crosses the membrane as a helical span at residues 211-229 (GYVFLINLIPLHVLVLMLT). Over 230–234 (GRFSH) the chain is Cytoplasmic. The helical transmembrane segment at 235-253 (RIYVAYCTVYCLGTILSMQ) threads the bilayer. Topologically, residues 254 to 265 (ISFVGFQPVLSS) are lumenal. A helical membrane pass occupies residues 266–283 (EHMAAFGVFGLCQIHAFV). Residues 284–298 (DYLRSKLNPQQFEVL) lie on the Cytoplasmic side of the membrane. Residues 299-317 (FRSVISLVGFVLLTVGALL) traverse the membrane as a helical segment. Over 318-356 (MLTGKISPWTGRFYSLLDPSYAKNNIPIIASVSEHQPTT) the chain is Lumenal. An SVSE motif motif is present at residues 348–351 (SVSE). Residues 357–379 (WSSYYFDLQLLVFMFPVGLYYCF) traverse the membrane as a helical segment. At 380 to 385 (SNLSDA) the chain is on the cytoplasmic side. The chain crosses the membrane as a helical span at residues 386-402 (RIFIIMYGVTSMYFSAV). At 403–406 (MVRL) the chain is on the lumenal side. Arg405 lines the dolichyl diphosphooligosaccharide pocket. The chain crosses the membrane as a helical span at residues 407 to 428 (MLVLAPVMCILSGIGVSQVLST). Residues 429–453 (YMKNLDISRPDKKSKKQQDSTYPIK) are Cytoplasmic-facing. A helical transmembrane segment spans residues 454–473 (NEVASGMILVMAFFLITYTF). Topologically, residues 474–705 (HSTWVTSEAY…DLDNRGLSRT (232 aa)) are lumenal. An interacts with target acceptor peptide in protein substrate region spans residues 525-527 (WWD). Positions 525-529 (WWDYG) match the WWDYG motif motif. Tyr530 is a binding site for dolichyl diphosphooligosaccharide. N-linked (GlcNAc...) asparagine glycans are attached at residues Asn537 and Asn544. A glycan (N-linked (GlcNAc...) (high mannose) asparagine) is linked at Asn548. Positions 592-599 (DINKFLWM) match the DK motif motif.

The protein belongs to the STT3 family. In terms of assembly, component of the oligosaccharyltransferase (OST) complex. There are 2 OST complexes, OST-A and OST-B, which contain STT3A or STT3B as catalytic subunit, respectively. OST-A and OST-B contain common core subunits RPN1, RPN2, OST48, OST4, DAD1 and TMEM258, and OST-A contains DC2/OSTC and KRTCAP2/KCP2 specific accessory subunits. OST-A complex assembly occurs through the formation of 3 subcomplexes. Subcomplex 1 contains RPN1 and TMEM258, subcomplex 2 contains the OST-A-specific subunits STT3A, DC2/OSTC, and KCP2 as well as the core subunit OST4, and subcomplex 3 contains RPN2, DAD1, and OST48. The OST-A complex can form stable complexes with the Sec61 complex or with both the Sec61 and TRAP complexes. Mg(2+) serves as cofactor. Mn(2+) is required as a cofactor.

It is found in the endoplasmic reticulum membrane. The enzyme catalyses a di-trans,poly-cis-dolichyl diphosphooligosaccharide + L-asparaginyl-[protein] = N(4)-(oligosaccharide-(1-&gt;4)-N-acetyl-beta-D-glucosaminyl-(1-&gt;4)-N-acetyl-beta-D-glucosaminyl)-L-asparaginyl-[protein] + a di-trans,poly-cis-dolichyl diphosphate + H(+). It participates in protein modification; protein glycosylation. Functionally, catalytic subunit of the oligosaccharyl transferase (OST) complex that catalyzes the initial transfer of a defined glycan (Glc(3)Man(9)GlcNAc(2) in eukaryotes) from the lipid carrier dolichol-pyrophosphate to an asparagine residue within an Asn-X-Ser/Thr consensus motif in nascent polypeptide chains, the first step in protein N-glycosylation. N-glycosylation occurs cotranslationally and the complex associates with the Sec61 complex at the channel-forming translocon complex that mediates protein translocation across the endoplasmic reticulum (ER). All subunits are required for a maximal enzyme activity. This subunit contains the active site and the acceptor peptide and donor lipid-linked oligosaccharide (LLO) binding pockets. STT3A is present in the majority of OST complexes and mediates cotranslational N-glycosylation of most sites on target proteins, while STT3B-containing complexes are required for efficient post-translational glycosylation and mediate glycosylation of sites that have been skipped by STT3A. STT3A-containing OST-A complex is also required to prevent hyperglycosylation of some target proteins by preventing glycosylation of facultative sites before folding of target proteins is completed. The chain is Dolichyl-diphosphooligosaccharide--protein glycosyltransferase subunit STT3A from Canis lupus familiaris (Dog).